Here is a 293-residue protein sequence, read N- to C-terminus: Large ribosomal subunit protein uL4c (293 aa).

The transit peptide at Met-1–Ser-50 directs the protein to the chloroplast. 2 disordered regions span residues Glu-107–Gly-138 and Tyr-259–Glu-293. A compositionally biased stretch (basic residues) spans Tyr-116–Arg-126. Residues Thr-263–Glu-293 show a composition bias toward acidic residues.

This sequence belongs to the universal ribosomal protein uL4 family. As to quaternary structure, component of the chloroplast large ribosomal subunit (LSU). Mature 70S chloroplast ribosomes of higher plants consist of a small (30S) and a large (50S) subunit. The 30S small subunit contains 1 molecule of ribosomal RNA (16S rRNA) and 24 different proteins. The 50S large subunit contains 3 rRNA molecules (23S, 5S and 4.5S rRNA) and 33 different proteins. In terms of tissue distribution, highly expressed in cotyledon and weakly in roots.

Its subcellular location is the plastid. The protein resides in the chloroplast. Its function is as follows. Component of the chloroplast ribosome (chloro-ribosome), a dedicated translation machinery responsible for the synthesis of chloroplast genome-encoded proteins, including proteins of the transcription and translation machinery and components of the photosynthetic apparatus. The sequence is that of Large ribosomal subunit protein uL4c (RPL4) from Spinacia oleracea (Spinach).